The chain runs to 410 residues: Arginine deiminase (410 aa).

The active-site Amidino-cysteine intermediate is cysteine 400.

This sequence belongs to the arginine deiminase family.

It is found in the cytoplasm. It carries out the reaction L-arginine + H2O = L-citrulline + NH4(+). It functions in the pathway amino-acid degradation; L-arginine degradation via ADI pathway; carbamoyl phosphate from L-arginine: step 1/2. This Lactococcus lactis subsp. cremoris (strain MG1363) protein is Arginine deiminase.